The sequence spans 221 residues: GTP-binding nuclear protein Ran-1 (221 aa).

The Small GTPase Ran-type domain occupies 10-174 (DYPSFKLVIV…LYLARKLAGD (165 aa)). GTP is bound at residue 21 to 28 (DGGTGKTT). The interval 40 to 48 (KKYEPTIGV) is switch-I. Residues G71, 125-128 (NKVD), and 153-155 (SAK) each bind GTP. The switch-II stretch occupies residues 71-87 (GQEKFGGLRDGYYIHGQ).

This sequence belongs to the small GTPase superfamily. Ran family. Found in a nuclear export complex with RanGTP, exportin and pre-miRNA. Interacts with RANBP1A and RANBP1B. Interacts with TRN1. Interacts with ATX1. Interacts with KPNB1. Binds to XPO1. Interacts with MOS14. Binds to NTF2B.

Its subcellular location is the nucleus. Its function is as follows. GTP-binding protein involved in nucleocytoplasmic transport. Required for the import of protein into the nucleus and also for RNA export. Involved in chromatin condensation and control of cell cycle. The polypeptide is GTP-binding nuclear protein Ran-1 (RAN1) (Arabidopsis thaliana (Mouse-ear cress)).